A 279-amino-acid polypeptide reads, in one-letter code: Protein gustavus (279 aa).

The B30.2/SPRY domain occupies 36–233 (PARIDILLDM…ITMRYIGGLD (198 aa)). Residues 234–279 (PEPLPLMDLCRRTIRQKIGRTNLEEHIQQLQLPLSMKTYLLYKNRR) form the SOCS box domain. Residues 236 to 279 (PLPLMDLCRRTIRQKIGRTNLEEHIQQLQLPLSMKTYLLYKNRR) form an involved in binding to the Elongin BC complex region.

Belongs to the SPSB family. As to quaternary structure, interacts (via B30.2/SPRY domain) with vas; this interaction may be necessary for the transport of vas to the posterior pole of the oocyte. Interacts with Cul-5. May associate with the Elongin BC complex composed of Elongin-B and Elongin-C. In terms of tissue distribution, expressed in ovaries, primarily in nurse cells and oocytes (at protein level).

It is found in the cytoplasm. The protein resides in the nucleus. Involved in the localization of vas to the posterior pole of the oocyte. Required maternally in the germ line for efficient primordial germ cell formation. This Drosophila melanogaster (Fruit fly) protein is Protein gustavus (gus).